A 275-amino-acid polypeptide reads, in one-letter code: COP9 signalosome complex subunit 7a (275 aa).

Ser-2 is modified (N-acetylserine). Residues 2-159 (SAEVKVTGQN…QRLEVDYSIG (158 aa)) form the PCI domain. Residues 185-233 (LSGIEEQVSRANQHKEQQLGLKQQIESEVANLKKTIKVTTAAAAAATSQ) adopt a coiled-coil conformation. The interval 228-275 (AAATSQDPEQHLTELREPASGTNQRQPSKKASKGKGLRGSAKIWSKSN) is disordered. Residues 235–244 (PEQHLTELRE) show a composition bias toward basic and acidic residues. Positions 254–263 (PSKKASKGKG) are enriched in basic residues.

This sequence belongs to the CSN7/EIF3M family. CSN7 subfamily. In terms of assembly, component of the CSN complex, composed of COPS1/GPS1, COPS2, COPS3, COPS4, COPS5, COPS6, COPS7 (COPS7A or COPS7B), COPS8 and COPS9. In the complex, it probably interacts directly with COPS1, COPS2, COPS4, COPS5, COPS6 and COPS8. Interacts with PMF1. Interacts with the translation initiation factor EIF3S6. Interacts with CK2 and PKD. Interacts directly with ID3. Post-translationally, phosphorylated by CK2 and PKD kinases.

The protein resides in the cytoplasm. It is found in the nucleus. Component of the COP9 signalosome complex (CSN), a complex involved in various cellular and developmental processes. The CSN complex is an essential regulator of the ubiquitin (Ubl) conjugation pathway by mediating the deneddylation of the cullin subunits of SCF-type E3 ligase complexes, leading to decrease the Ubl ligase activity of SCF-type complexes such as SCF, CSA or DDB2. The complex is also involved in phosphorylation of p53/TP53, JUN, I-kappa-B-alpha/NFKBIA, ITPK1 and IRF8/ICSBP, possibly via its association with CK2 and PKD kinases. CSN-dependent phosphorylation of TP53 and JUN promotes and protects degradation by the Ubl system, respectively. This is COP9 signalosome complex subunit 7a (Cops7a) from Mus musculus (Mouse).